We begin with the raw amino-acid sequence, 754 residues long: 5-methyltetrahydropteroyltriglutamate--homocysteine methyltransferase (754 aa).

5-methyltetrahydropteroyltri-L-glutamate contacts are provided by residues 17-20 (RELK) and Lys-117. L-homocysteine-binding positions include 431–433 (IGS) and Glu-484. L-methionine-binding positions include 431 to 433 (IGS) and Glu-484. Residues 515–516 (RC) and Trp-561 each bind 5-methyltetrahydropteroyltri-L-glutamate. Residue Asp-599 participates in L-homocysteine binding. Residue Asp-599 coordinates L-methionine. Glu-605 lines the 5-methyltetrahydropteroyltri-L-glutamate pocket. 3 residues coordinate Zn(2+): His-641, Cys-643, and Glu-665. The active-site Proton donor is the His-694. Position 726 (Cys-726) interacts with Zn(2+).

This sequence belongs to the vitamin-B12 independent methionine synthase family. The cofactor is Zn(2+).

The enzyme catalyses 5-methyltetrahydropteroyltri-L-glutamate + L-homocysteine = tetrahydropteroyltri-L-glutamate + L-methionine. Its pathway is amino-acid biosynthesis; L-methionine biosynthesis via de novo pathway; L-methionine from L-homocysteine (MetE route): step 1/1. Its function is as follows. Catalyzes the transfer of a methyl group from 5-methyltetrahydrofolate to homocysteine resulting in methionine formation. The polypeptide is 5-methyltetrahydropteroyltriglutamate--homocysteine methyltransferase (Klebsiella pneumoniae subsp. pneumoniae (strain ATCC 700721 / MGH 78578)).